A 431-amino-acid chain; its full sequence is Forkhead box protein N2 (431 aa).

A DNA-binding region (fork-head) is located at residues lysine 112 to serine 208. A disordered region spans residues aspartate 364–lysine 387.

The protein resides in the nucleus. Functionally, binds to the purine-rich region in HTLV-I LTR. This is Forkhead box protein N2 (FOXN2) from Homo sapiens (Human).